We begin with the raw amino-acid sequence, 338 residues long: Mitochondrial transcription factor 1 (338 aa).

S-adenosyl-L-methionine is bound by residues Leu23, Asp76, Asp100, and Asn136.

Belongs to the class I-like SAM-binding methyltransferase superfamily. rRNA adenine N(6)-methyltransferase family.

It localises to the mitochondrion. In terms of biological role, mitochondrial transcription factor that confers selective promoter recognition on the core subunit of the yeast mitochondrial RNA polymerase. Interacts with DNA in a non-specific manner. This chain is Mitochondrial transcription factor 1 (MTF1), found in Lachancea kluyveri (Yeast).